The chain runs to 274 residues: NH(3)-dependent NAD(+) synthetase (274 aa).

Glycine 46 to serine 53 serves as a coordination point for ATP. Aspartate 52 is a binding site for Mg(2+). Arginine 140 provides a ligand contact to deamido-NAD(+). ATP is bound at residue threonine 160. Mg(2+) is bound at residue glutamate 165. Positions 173 and 180 each coordinate deamido-NAD(+). Positions 189 and 211 each coordinate ATP. Histidine 260–lysine 261 serves as a coordination point for deamido-NAD(+).

The protein belongs to the NAD synthetase family. As to quaternary structure, homodimer.

It carries out the reaction deamido-NAD(+) + NH4(+) + ATP = AMP + diphosphate + NAD(+) + H(+). It participates in cofactor biosynthesis; NAD(+) biosynthesis; NAD(+) from deamido-NAD(+) (ammonia route): step 1/1. Catalyzes the ATP-dependent amidation of deamido-NAD to form NAD. Uses ammonia as a nitrogen source. The sequence is that of NH(3)-dependent NAD(+) synthetase from Rhodococcus erythropolis (strain PR4 / NBRC 100887).